We begin with the raw amino-acid sequence, 315 residues long: tRNA dimethylallyltransferase (315 aa).

An ATP-binding site is contributed by 11 to 18 (GPTASGKS). 13–18 (TASGKS) is a substrate binding site. 2 interaction with substrate tRNA regions span residues 36–39 (DSMQ) and 160–164 (QRLIR).

This sequence belongs to the IPP transferase family. As to quaternary structure, monomer. The cofactor is Mg(2+).

The enzyme catalyses adenosine(37) in tRNA + dimethylallyl diphosphate = N(6)-dimethylallyladenosine(37) in tRNA + diphosphate. Functionally, catalyzes the transfer of a dimethylallyl group onto the adenine at position 37 in tRNAs that read codons beginning with uridine, leading to the formation of N6-(dimethylallyl)adenosine (i(6)A). The polypeptide is tRNA dimethylallyltransferase (Rickettsia bellii (strain OSU 85-389)).